Consider the following 76-residue polypeptide: uncharacterized protein (76 aa).

Transmembrane regions (helical) follow at residues 9–29 (AIGI…LQAV) and 45–65 (LLMI…FLDY).

It localises to the cell membrane. This is an uncharacterized protein from Bacillus subtilis (strain 168).